Consider the following 336-residue polypeptide: tRNA N6-adenosine threonylcarbamoyltransferase (336 aa).

Fe cation contacts are provided by H114 and H118. Residues 136 to 140 (LVSGG), D169, G182, D186, and N275 contribute to the substrate site. D301 is a binding site for Fe cation.

This sequence belongs to the KAE1 / TsaD family. Requires Fe(2+) as cofactor.

The protein resides in the cytoplasm. The catalysed reaction is L-threonylcarbamoyladenylate + adenosine(37) in tRNA = N(6)-L-threonylcarbamoyladenosine(37) in tRNA + AMP + H(+). Required for the formation of a threonylcarbamoyl group on adenosine at position 37 (t(6)A37) in tRNAs that read codons beginning with adenine. Is involved in the transfer of the threonylcarbamoyl moiety of threonylcarbamoyl-AMP (TC-AMP) to the N6 group of A37, together with TsaE and TsaB. TsaD likely plays a direct catalytic role in this reaction. This is tRNA N6-adenosine threonylcarbamoyltransferase from Streptococcus pneumoniae (strain P1031).